The following is a 230-amino-acid chain: 5'-methylthioadenosine/S-adenosylhomocysteine nucleosidase (230 aa).

E12 serves as the catalytic Proton acceptor. Substrate-binding positions include G78, I153, and 174 to 175 (ME). D198 acts as the Proton donor in catalysis.

This sequence belongs to the PNP/UDP phosphorylase family. MtnN subfamily.

The enzyme catalyses S-adenosyl-L-homocysteine + H2O = S-(5-deoxy-D-ribos-5-yl)-L-homocysteine + adenine. It catalyses the reaction S-methyl-5'-thioadenosine + H2O = 5-(methylsulfanyl)-D-ribose + adenine. The catalysed reaction is 5'-deoxyadenosine + H2O = 5-deoxy-D-ribose + adenine. It participates in amino-acid biosynthesis; L-methionine biosynthesis via salvage pathway; S-methyl-5-thio-alpha-D-ribose 1-phosphate from S-methyl-5'-thioadenosine (hydrolase route): step 1/2. Its function is as follows. Catalyzes the irreversible cleavage of the glycosidic bond in both 5'-methylthioadenosine (MTA) and S-adenosylhomocysteine (SAH/AdoHcy) to adenine and the corresponding thioribose, 5'-methylthioribose and S-ribosylhomocysteine, respectively. Also cleaves 5'-deoxyadenosine, a toxic by-product of radical S-adenosylmethionine (SAM) enzymes, into 5-deoxyribose and adenine. The protein is 5'-methylthioadenosine/S-adenosylhomocysteine nucleosidase of Shewanella sediminis (strain HAW-EB3).